Reading from the N-terminus, the 420-residue chain is MGEKPGTRVFKKSSPNCKLTVYLGKRDFVDHLDKVDPVDGVVLVDPDYLKDRKVFVTLTCAFRYGREDLDVLGLSFRKDLFIANYQAFPPTPNPPRPPTRLQERLLRKLGQHAHPFFFTIPQNLPCSVTLQPGPEDTGKACGVDFEIRAFCAKSLEEKSHKRNSVRLVIRKVQFAPEKPGPQPSAETTRHFLMSDRSLHLEASLDKELYYHGEPLNVNVHVTNNSTKTVKKIKVSVRQYADICLFSTAQYKCPVAQVEQDDQVSPSSTFCKVYTITPLLSNNREKRGLALDGKLKHEDTNLASSTIVKEGANKEVLGILVSYRVKVKLVVSRGGDVSVELPFVLMHPKPHDHIALPRPQSAATHPPTLLPSAVPETDAPVDTNLIEFETNYATDDDIVFEDFARLRLKGLKDEDYDDQFC.

Position 48 is a phosphotyrosine (tyrosine 48). 2 positions are modified to hydroxyproline; by PHD2: proline 176 and proline 181. The interval 240–409 (ADICLFSTAQ…EDFARLRLKG (170 aa)) is interaction with TRAF6. Position 360 is a phosphoserine (serine 360). The interval 374–420 (PETDAPVDTNLIEFETNYATDDDIVFEDFARLRLKGLKDEDYDDQFC) is interaction with AP2B1. Threonine 393 is modified (phosphothreonine). Residues 396–406 (DIVFEDFARLR) carry the [DE]-X(1,2)-F-X-X-[FL]-X-X-X-R motif motif.

This sequence belongs to the arrestin family. Homooligomer; the self-association is mediated by InsP6-binding. Heterooligomer with ARRB1; the association is mediated by InsP6-binding. Interacts with ADRB2 and CHRM2. Interacts with PDE4A. Interacts with PDE4D. Interacts with MAPK10, MAPK1 and MAPK3. Interacts with DRD2. Interacts with FSHR. Interacts with CLTC. Interacts with HTR2C. Interacts with CRR5. Interacts with CXCR4. Interacts with SRC. Interacts with DUSP16; the interaction is interrupted by stimulation of AGTR1 and activation of MAPK10. Interacts with CHUK; the interaction is enhanced stimulation of ADRB2. Interacts with RELA. Interacts with MDM2; the interaction is enhanced by activation of GPCRs. Interacts with SLC9A5. Interacts with TRAF6. Interacts with IGF1R. Interacts with ENG. Interacts with KIR2DL1, KIR2DL3 and KIR2DL4. Interacts with LDLR. Interacts with AP2B1. Interacts with C5AR1. Interacts with RAF1. Interacts with MAP2K1. Interacts with MAPK1. Interacts with MAPK10; the interaction enhances MAPK10 activation by MAP3K5. Interacts with MAP2K4; the interaction is enhanced by presence of MAP3K5 and MAPK10. Interacts with MAP3K5. Interacts with AKT1. Interacts with IKBKB and MAP3K14. Interacts with SMO (activated). Interacts with GSK3A and GSK3B. Associates with protein phosphatase 2A (PP2A). Interacts with CXCR4; the interaction is dependent on C-terminal phosphorylation of CXCR4 and allows activation of MAPK1 and MAPK3. Interacts with GPR143. Interacts with HCK and CXCR1 (phosphorylated). Interacts with ACKR3 and ACKR4. Interacts with ARRDC1; the interaction is direct. Interacts with GPR61, GPR62 and GPR135. Interacts (via NACHT and LRR domains) with NLRP3; this interaction is direct and inducible by omega-3 polyunsaturated fatty acids (PUFAs). Interacts with FFAR4 (via C-terminus); this interaction is stimulated by long-chain fatty acids (LCFAs). Interacts with GPR35. Interacts with GPR84. Interacts with TIGIT; this interaction inhibits the NF-kappa-B pathway. Interacts with TGFBR3. Post-translationally, phosphorylated at Thr-382 in the cytoplasm; probably dephosphorylated at the plasma membrane. The phosphorylation does not regulate internalization and recycling of ADRB2, interaction with clathrin or AP2B1. In terms of processing, the ubiquitination status appears to regulate the formation and trafficking of beta-arrestin-GPCR complexes and signaling. Ubiquitination appears to occur GPCR-specific. Ubiquitinated by MDM2; the ubiquitination is required for rapid internalization of ADRB2. Deubiquitinated by USP33; the deubiquitination leads to a dissociation of the beta-arrestin-GPCR complex. Stimulation of a class A GPCR, such as ADRB2, induces transient ubiquitination and subsequently promotes association with USP33. Stimulation of a class B GPCR promotes a sustained ubiquitination. Deubiquitinated by USP20; allowing USP20 to deubiquitinate TRAF6 leading to inhibition of NF-kappa-B signaling. Hydroxylation by PHD2 modulates the rate of internalization by slowing down recruitment to the plasma membrane and inhibiting subsequent co-internalization with class A receptors. Found in a variety of tissues. The short isoform is the most abundant form in all tissues.

It is found in the cytoplasm. It localises to the nucleus. Its subcellular location is the cell membrane. The protein resides in the membrane. The protein localises to the clathrin-coated pit. It is found in the cytoplasmic vesicle. Its function is as follows. Functions in regulating agonist-mediated G-protein coupled receptor (GPCR) signaling by mediating both receptor desensitization and resensitization processes. During homologous desensitization, beta-arrestins bind to the GPRK-phosphorylated receptor and sterically preclude its coupling to the cognate G-protein; the binding appears to require additional receptor determinants exposed only in the active receptor conformation. The beta-arrestins target many receptors for internalization by acting as endocytic adapters (CLASPs, clathrin-associated sorting proteins) and recruiting the GPRCs to the adapter protein 2 complex 2 (AP-2) in clathrin-coated pits (CCPs). However, the extent of beta-arrestin involvement appears to vary significantly depending on the receptor, agonist and cell type. Internalized arrestin-receptor complexes traffic to intracellular endosomes, where they remain uncoupled from G-proteins. Two different modes of arrestin-mediated internalization occur. Class A receptors, like ADRB2, OPRM1, ENDRA, D1AR and ADRA1B dissociate from beta-arrestin at or near the plasma membrane and undergo rapid recycling. Class B receptors, like AVPR2, AGTR1, NTSR1, TRHR and TACR1 internalize as a complex with arrestin and traffic with it to endosomal vesicles, presumably as desensitized receptors, for extended periods of time. Receptor resensitization then requires that receptor-bound arrestin is removed so that the receptor can be dephosphorylated and returned to the plasma membrane. Mediates endocytosis of CCR7 following ligation of CCL19 but not CCL21. Involved in internalization of P2RY1, P2RY4, P2RY6 and P2RY11 and ATP-stimulated internalization of P2RY2. Involved in phosphorylation-dependent internalization of OPRD1 and subsequent recycling or degradation. Involved in ubiquitination of IGF1R. Beta-arrestins function as multivalent adapter proteins that can switch the GPCR from a G-protein signaling mode that transmits short-lived signals from the plasma membrane via small molecule second messengers and ion channels to a beta-arrestin signaling mode that transmits a distinct set of signals that are initiated as the receptor internalizes and transits the intracellular compartment. Acts as a signaling scaffold for MAPK pathways such as MAPK1/3 (ERK1/2) and MAPK10 (JNK3). ERK1/2 and JNK3 activated by the beta-arrestin scaffold are largely excluded from the nucleus and confined to cytoplasmic locations such as endocytic vesicles, also called beta-arrestin signalosomes. Acts as a signaling scaffold for the AKT1 pathway. GPCRs for which the beta-arrestin-mediated signaling relies on both ARRB1 and ARRB2 (codependent regulation) include ADRB2, F2RL1 and PTH1R. For some GPCRs the beta-arrestin-mediated signaling relies on either ARRB1 or ARRB2 and is inhibited by the other respective beta-arrestin form (reciprocal regulation). Increases ERK1/2 signaling in AGTR1- and AVPR2-mediated activation (reciprocal regulation). Involved in CCR7-mediated ERK1/2 signaling involving ligand CCL19. Is involved in type-1A angiotensin II receptor/AGTR1-mediated ERK activity. Is involved in type-1A angiotensin II receptor/AGTR1-mediated MAPK10 activity. Is involved in dopamine-stimulated AKT1 activity in the striatum by disrupting the association of AKT1 with its negative regulator PP2A. Involved in AGTR1-mediated chemotaxis. Appears to function as signaling scaffold involved in regulation of MIP-1-beta-stimulated CCR5-dependent chemotaxis. Involved in attenuation of NF-kappa-B-dependent transcription in response to GPCR or cytokine stimulation by interacting with and stabilizing CHUK. Suppresses UV-induced NF-kappa-B-dependent activation by interacting with CHUK. The function is promoted by stimulation of ADRB2 and dephosphorylation of ARRB2. Involved in p53/TP53-mediated apoptosis by regulating MDM2 and reducing the MDM2-mediated degradation of p53/TP53. May serve as nuclear messenger for GPCRs. Upon stimulation of OR1D2, may be involved in regulation of gene expression during the early processes of fertilization. Also involved in regulation of receptors other than GPCRs. Involved in endocytosis of TGFBR2 and TGFBR3 and down-regulates TGF-beta signaling such as NF-kappa-B activation. Involved in endocytosis of low-density lipoprotein receptor/LDLR. Involved in endocytosis of smoothened homolog/Smo, which also requires GRK2. Involved in endocytosis of SLC9A5. Involved in endocytosis of ENG and subsequent TGF-beta-mediated ERK activation and migration of epithelial cells. Involved in Toll-like receptor and IL-1 receptor signaling through the interaction with TRAF6 which prevents TRAF6 autoubiquitination and oligomerization required for activation of NF-kappa-B and JUN. Involved in insulin resistance by acting as insulin-induced signaling scaffold for SRC, AKT1 and INSR. Involved in regulation of inhibitory signaling of natural killer cells by recruiting PTPN6 and PTPN11 to KIR2DL1. Involved in IL8-mediated granule release in neutrophils. Involved in the internalization of the atypical chemokine receptor ACKR3. Acts as an adapter protein coupling FFAR4 receptor to specific downstream signaling pathways, as well as mediating receptor endocytosis. During the activation step of NLRP3 inflammasome, directly associates with NLRP3 leading to inhibition of pro-inflammatory cytokine release and inhibition of inflammation. The polypeptide is Beta-arrestin-2 (ARRB2) (Bos taurus (Bovine)).